A 308-amino-acid polypeptide reads, in one-letter code: Putative transcription elongation factor S-II (308 aa).

The 80-residue stretch at 5 to 84 (EETQSLCKQV…KDWKNVVDGK (80 aa)) folds into the TFIIS N-terminal domain. A disordered region spans residues 82–126 (DGKSKSQDDGGAPPAKKHRKESVEEAKPEKKKIEAPYKRPEPSSR). A compositionally biased stretch (basic and acidic residues) spans 102-125 (ESVEEAKPEKKKIEAPYKRPEPSS). The region spanning 148 to 263 (TRLKSAQLLL…EHQMSVQQGT (116 aa)) is the TFIIS central domain. Residues 266–306 (DMFKCGKCGKKNCTYTQLQTRSSDEPMTTFVFCLECGNRWK) form a TFIIS-type zinc finger. 4 residues coordinate Zn(2+): Cys270, Cys273, Cys298, and Cys301.

This sequence belongs to the TFS-II family.

It is found in the nucleus. In terms of biological role, necessary for efficient RNA polymerase II transcription elongation past template-encoded arresting sites. The arresting sites in DNA have the property of trapping a certain fraction of elongating RNA polymerases that pass through, resulting in locked ternary complexes. Cleavage of the nascent transcript by S-II allows the resumption of elongation from the new 3'-terminus. This chain is Putative transcription elongation factor S-II, found in Caenorhabditis elegans.